A 570-amino-acid chain; its full sequence is MSYRMNRRTYAETFGPTVGDRVRLADTELFIQVEKDYTTYGDEVKFGGGKVIRDGMGQSPISREGGAVDLVITNALILDWWGVVKADIGIKDGKIHKIGKAGNPYIQDRVDIIIGPSTEIIAGEGHIITAGGIDSHIHFICPQQIEIAIASGITTMIGGGTGPATGTNATTCTPGQWNIWMMLQAADAFPMNLGFLGKGNSAKPEGLIEQIKAGAMGLKLHEDWGTTPAAIDTCLSVADEYDVQVAIHTDTLNEAGFVENTIAAFKDRVIHTYHTEGAGGGHAPDIIKVCALKNVLPSSTNPTRPFTVNTLEEHLDMLMVCHHLDKNIPEDVAFAESRIRKETIAAEDILHDLGAFSAIASDSQAMGRVGEVIIRTWQTAHKMKVQRGILASEKKEVADNFRAKRYIAKYTINPAIMHGIADYVGSIEAGKLADICLWKPAMFGVKPEIVIKGGAIAWAQMGDPNASIPTPQPVYMRPMFGSFGGATSSTSLTFVSQEALDAEIPKKINLKTPAVAVSNTRNISKADMKLNEATPKIEVNPETYEVRADGELLTCEPAYVLPMTQRYFLF.

Residues 131-570 (GGIDSHIHFI…LPMTQRYFLF (440 aa)) enclose the Urease domain. Residues His136, His138, and Lys219 each coordinate Ni(2+). Lys219 carries the post-translational modification N6-carboxylysine. Substrate is bound at residue His221. 2 residues coordinate Ni(2+): His248 and His274. His322 acts as the Proton donor in catalysis. Asp362 contributes to the Ni(2+) binding site.

This sequence belongs to the metallo-dependent hydrolases superfamily. Urease alpha subunit family. As to quaternary structure, heterotrimer of UreA (gamma), UreB (beta) and UreC (alpha) subunits. Three heterotrimers associate to form the active enzyme. Requires Ni cation as cofactor. Post-translationally, carboxylation allows a single lysine to coordinate two nickel ions.

The protein localises to the cytoplasm. The catalysed reaction is urea + 2 H2O + H(+) = hydrogencarbonate + 2 NH4(+). It functions in the pathway nitrogen metabolism; urea degradation; CO(2) and NH(3) from urea (urease route): step 1/1. In Trichodesmium erythraeum (strain IMS101), this protein is Urease subunit alpha.